Consider the following 392-residue polypeptide: MNICDLAPAYIRAISPYQPGKPISELAREMGMDEQSIIKLASNENPLGTSPMALNAMSKALDEVSLYPDGSGFELKAALSERYGVTSDQIVLGNGSNDVLELAARVFLKPGASTVYSQHAFAVYPLVTKAVGGIGISVPARNYGHDLDAMLDAVAPETRVVFIANPNNPTGTLLPADDVLRFLERVSPDVLVVLDEAYNEYLPPALKGDSIAWLKQFPNLLITRTFSKAYGMAGVRVGFGLGHPDVAGLMNRVRQPFNVNNIGLAGAVAALQDEEFVKRSYALNQAGMLQIVTGLRQMGIEYIPSYGNFLSFRVPGNVKAINESLLKQGVIVRPISIYEMPEHLRVTVGLESENEKFLKSLAIALETTEGAAADTIPEMAVSFPKVASGGTA.

At K228 the chain carries N6-(pyridoxal phosphate)lysine.

The protein belongs to the class-II pyridoxal-phosphate-dependent aminotransferase family. Histidinol-phosphate aminotransferase subfamily. As to quaternary structure, homodimer. Requires pyridoxal 5'-phosphate as cofactor.

It catalyses the reaction L-histidinol phosphate + 2-oxoglutarate = 3-(imidazol-4-yl)-2-oxopropyl phosphate + L-glutamate. Its pathway is amino-acid biosynthesis; L-histidine biosynthesis; L-histidine from 5-phospho-alpha-D-ribose 1-diphosphate: step 7/9. The sequence is that of Histidinol-phosphate aminotransferase 2 from Nitrosospira multiformis (strain ATCC 25196 / NCIMB 11849 / C 71).